Here is a 290-residue protein sequence, read N- to C-terminus: N-acetylneuraminate lyase (290 aa).

Positions 44 and 45 each coordinate aceneuramate. Tyr-133 serves as the catalytic Proton donor. The active-site Schiff-base intermediate with substrate is Lys-161. Aceneuramate-binding residues include Thr-163, Gly-185, Asp-187, Glu-188, and Ser-204.

This sequence belongs to the DapA family. NanA subfamily. Homotetramer.

The protein localises to the cytoplasm. The enzyme catalyses aceneuramate = aldehydo-N-acetyl-D-mannosamine + pyruvate. The protein operates within amino-sugar metabolism; N-acetylneuraminate degradation; D-fructose 6-phosphate from N-acetylneuraminate: step 1/5. Catalyzes the reversible aldol cleavage of N-acetylneuraminic acid (sialic acid; Neu5Ac) to form pyruvate and N-acetylmannosamine (ManNAc) via a Schiff base intermediate. The protein is N-acetylneuraminate lyase of Fusobacterium nucleatum subsp. nucleatum (strain ATCC 25586 / DSM 15643 / BCRC 10681 / CIP 101130 / JCM 8532 / KCTC 2640 / LMG 13131 / VPI 4355).